The chain runs to 918 residues: Whirlin (918 aa).

Residues 141-224 (LVSLRRAKAH…LVLSVYSAGR (84 aa)) form the PDZ 1 domain. Residues 240–266 (PQGRSTSPPSSLPQPHGSTLRQREDDR) form a disordered region. The PDZ 2 domain maps to 280–362 (KVNLVLGDGR…LILTVKDVGR (83 aa)). 3 disordered regions span residues 387–407 (NSAG…GFYK), 503–538 (SMKA…TSTT), and 560–824 (EGTG…LEPT). Over residues 522–538 (SYSDTGSSTGSHGTSTT) the composition is skewed to low complexity. The span at 563–572 (GETTQGSTNA) shows a compositional bias: polar residues. Composition is skewed to pro residues over residues 591–600 (IKPPPPPPPL) and 638–649 (RSPPPGTAPTPG). Polar residues predominate over residues 654 to 672 (QDSPSSPIYASISHANPSS). Ser696 is subject to Phosphoserine. 2 stretches are compositionally biased toward polar residues: residues 754 to 773 (QTRT…TLSE) and 783 to 798 (EAST…SAKN). A compositionally biased stretch (basic and acidic residues) spans 800-811 (NGKEQPRTERTA). Residues 827–910 (LVRVRKSAAT…TKERDYIDFL (84 aa)) enclose the PDZ 3 domain.

In terms of assembly, forms homooligomers. Interacts (via C-terminal PDZ domain) with MYO15A; this interaction is necessary for localization of WHRN to stereocilia tips. Interacts (via C-terminal PDZ domain) with MPP1/p55. Interacts with LRRC4C/NGL1. Interacts with MYO7A. Interacts with RPGR. Interacts with EPS8. Interacts with CASK. Interacts with CIB2. Component of USH2 complex, composed of ADGRV1, PDZD7, USH2A and WHRN. Interacts (via PDZ domains) with PDZD7; the interaction is direct. Interacts (via N-terminal PDZ domain) with USH2A (via cytoplasmic region). Interacts with ADGRV1/MASS1 (via cytoplasmic region). Expressed in the retina. Colocalizes with RPGR in the photoreceptor connecting cilium, a thin bridge linking the cell body and the light-sensing outer segment (at protein level). Detected in the inner ear throughout development from embryonic day 12 to 20 days after birth. Displays a dynamic pattern of expression after birth, demonstrating an ordered appearance and fade-out across stereocilia rows. Isoforms 5, 6, 7 and 8 are not detected in the retina.

Its subcellular location is the cytoplasm. The protein resides in the cell projection. The protein localises to the stereocilium. It localises to the growth cone. It is found in the photoreceptor inner segment. Its subcellular location is the synapse. In terms of biological role, involved in hearing and vision as member of the USH2 complex. Necessary for elongation and maintenance of inner and outer hair cell stereocilia in the organ of Corti in the inner ear. Involved in the maintenance of the hair bundle ankle region, which connects stereocilia in cochlear hair cells of the inner ear. In retina photoreceptors, required for the maintenance of periciliary membrane complex that seems to play a role in regulating intracellular protein transport. This Mus musculus (Mouse) protein is Whirlin.